The primary structure comprises 383 residues: Acetylornithine deacetylase (383 aa).

H80 is a Zn(2+) binding site. D82 is an active-site residue. D112 lines the Zn(2+) pocket. Residue E144 is part of the active site. Zn(2+)-binding residues include E145, E169, and H355.

It belongs to the peptidase M20A family. ArgE subfamily. Homodimer. It depends on Zn(2+) as a cofactor. Requires Co(2+) as cofactor. Glutathione serves as cofactor.

It is found in the cytoplasm. It catalyses the reaction N(2)-acetyl-L-ornithine + H2O = L-ornithine + acetate. It participates in amino-acid biosynthesis; L-arginine biosynthesis; L-ornithine from N(2)-acetyl-L-ornithine (linear): step 1/1. In terms of biological role, catalyzes the hydrolysis of the amide bond of N(2)-acetylated L-amino acids. Cleaves the acetyl group from N-acetyl-L-ornithine to form L-ornithine, an intermediate in L-arginine biosynthesis pathway, and a branchpoint in the synthesis of polyamines. The sequence is that of Acetylornithine deacetylase from Shigella boydii serotype 18 (strain CDC 3083-94 / BS512).